The chain runs to 307 residues: Taste receptor type 2 member 10 (307 aa).

Residues 1-6 lie on the Extracellular side of the membrane; the sequence is MLRVVE. The helical transmembrane segment at 7–27 threads the bilayer; it reads GIFIFVVISESVFGVLGNGFI. At 28-42 the chain is on the cytoplasmic side; the sequence is GLVNCIDCAKNKLST. Residues 43-63 form a helical membrane-spanning segment; the sequence is IGFILTGLAISRIFLIWIIIT. Topologically, residues 64–100 are extracellular; that stretch reads DGFIQIFSPNIYASSNLIEYISYFWVIGNQSSMWFAT. The chain crosses the membrane as a helical span at residues 101 to 121; the sequence is SLSIFYFLKIANFSNYIFLWL. The Cytoplasmic segment spans residues 122 to 126; sequence KSRTN. A helical membrane pass occupies residues 127–147; it reads MVLPFMIVFLLISSLLNFAYI. Residues 148–179 are Extracellular-facing; that stretch reads AKILNDYKMKNDTVWDLNMYKSEYFIKQILLN. An N-linked (GlcNAc...) asparagine glycan is attached at Asn158. Residues 180 to 200 traverse the membrane as a helical segment; it reads LGVIFFFTLSLITCVLLIISL. The Cytoplasmic portion of the chain corresponds to 201-227; sequence WRHNRQMQSNVTGLRDSNTEAHVKAMK. The chain crosses the membrane as a helical span at residues 228-248; that stretch reads VLISFIILFILYFIGMAIEIS. The Extracellular segment spans residues 249 to 257; that stretch reads YFTVRENKL. A helical transmembrane segment spans residues 258-278; the sequence is LLMFGMTTTAIYPWGHSFILI. Over 279 to 307 the chain is Cytoplasmic; sequence LGNSKLKQASLRVLQQLKCCEKRKNLRVT.

The protein belongs to the G-protein coupled receptor T2R family.

Its subcellular location is the membrane. Its function is as follows. Receptor that may play a role in the perception of bitterness and is gustducin-linked. May play a role in sensing the chemical composition of the gastrointestinal content. The activity of this receptor may stimulate alpha gustducin, mediate PLC-beta-2 activation and lead to the gating of TRPM5. This chain is Taste receptor type 2 member 10 (TAS2R10), found in Pan paniscus (Pygmy chimpanzee).